A 194-amino-acid chain; its full sequence is HTH-type transcriptional regulator BetI (194 aa).

The HTH tetR-type domain occupies 8 to 68 (EIRRAQLIDA…ATMRHVLRDL (61 aa)). Positions 31 to 50 (TLASVAQRANISTGIVSHYF) form a DNA-binding region, H-T-H motif.

It functions in the pathway amine and polyamine biosynthesis; betaine biosynthesis via choline pathway [regulation]. Its function is as follows. Repressor involved in the biosynthesis of the osmoprotectant glycine betaine. It represses transcription of the choline transporter BetT and the genes of BetAB involved in the synthesis of glycine betaine. The polypeptide is HTH-type transcriptional regulator BetI (Burkholderia lata (strain ATCC 17760 / DSM 23089 / LMG 22485 / NCIMB 9086 / R18194 / 383)).